We begin with the raw amino-acid sequence, 52 residues long: Metchnikowin (52 aa).

Positions 1–24 (MQLNLGAIFLALLGVMATATSVLA) are cleaved as a signal peptide. A propeptide spanning residues 25–26 (EP) is cleaved from the precursor. Positions 28 to 52 (RHQGPIFDTRPSPFNPNQPRPGPIY) are disordered. Residues 40 to 52 (PFNPNQPRPGPIY) show a composition bias toward pro residues.

Hemolymph (at protein level). Highest expression in fat body.

It localises to the secreted. Its function is as follows. Potent antifungal and antibacterial activity against Gram-positive bacteria. The chain is Metchnikowin (Mtk) from Drosophila melanogaster (Fruit fly).